An 893-amino-acid polypeptide reads, in one-letter code: Dolichyl-phosphate-mannose--protein mannosyltransferase 1 (893 aa).

A run of 7 helical transmembrane segments spans residues 29-49 (FSFL…CVRA), 77-97 (LLMD…AALT), 124-144 (LFTC…VYFP), 147-167 (SKTA…LITM), 170-190 (YIMI…YWSV), 224-244 (AMFT…NLLG), and 258-278 (FSYI…VFAV). An MIR 1 domain is found at 310–364 (FADVAYGSLVTIRNAIPEHGYLHSSELLYPEGTEQQIISLVDEPNQNALWIIEHE). N370 carries N-linked (GlcNAc...) asparagine glycosylation. 2 MIR domains span residues 374–433 (IELL…IQIL) and 443–499 (NGTV…IESN). N443 carries N-linked (GlcNAc...) asparagine glycosylation. T451 is modified (phosphothreonine). The next 3 helical transmembrane spans lie at 573–593 (FVWY…IFCL), 610–630 (YNYN…PYIL), and 643–663 (ALYF…NAVF). N-linked (GlcNAc...) asparagine glycosylation occurs at N665. Residues 671–691 (ALSVIIMALMFLVYRLYSPFT) form a helical membrane-spanning segment. N-linked (GlcNAc...) asparagine glycosylation occurs at N720. The interval 785 to 893 (KAEQEAREAA…VAESAQARVE (109 aa)) is disordered. Residues 786-806 (AEQEAREAAEKAASEAAERSS) are compositionally biased toward basic and acidic residues. 2 stretches are compositionally biased toward low complexity: residues 807–823 (SEAA…AASV) and 854–864 (MEAAALNNAAE). The segment covering 868–878 (VVGSSPESVAS) has biased composition (polar residues).

This sequence belongs to the glycosyltransferase 39 family.

Its subcellular location is the endoplasmic reticulum membrane. The protein localises to the nucleus membrane. It carries out the reaction a di-trans,poly-cis-dolichyl beta-D-mannosyl phosphate + L-seryl-[protein] = 3-O-(alpha-D-mannosyl)-L-seryl-[protein] + a di-trans,poly-cis-dolichyl phosphate + H(+). The enzyme catalyses a di-trans,poly-cis-dolichyl beta-D-mannosyl phosphate + L-threonyl-[protein] = 3-O-(alpha-D-mannosyl)-L-threonyl-[protein] + a di-trans,poly-cis-dolichyl phosphate + H(+). It participates in protein modification; protein glycosylation. Its function is as follows. Transfers mannose from Dol-P-mannose to Ser or Thr residues on proteins. Required for normal cell growth and septum formation. Shown to actively O-mannosylate wsc1. In Schizosaccharomyces pombe (strain 972 / ATCC 24843) (Fission yeast), this protein is Dolichyl-phosphate-mannose--protein mannosyltransferase 1 (ogm1).